Here is a 159-residue protein sequence, read N- to C-terminus: Ribosomal RNA large subunit methyltransferase H (159 aa).

S-adenosyl-L-methionine is bound by residues Leu76, Gly108, and 127-132; that span reads FGLLTL.

It belongs to the RNA methyltransferase RlmH family. Homodimer.

It localises to the cytoplasm. The catalysed reaction is pseudouridine(1915) in 23S rRNA + S-adenosyl-L-methionine = N(3)-methylpseudouridine(1915) in 23S rRNA + S-adenosyl-L-homocysteine + H(+). Specifically methylates the pseudouridine at position 1915 (m3Psi1915) in 23S rRNA. This is Ribosomal RNA large subunit methyltransferase H from Leuconostoc mesenteroides subsp. mesenteroides (strain ATCC 8293 / DSM 20343 / BCRC 11652 / CCM 1803 / JCM 6124 / NCDO 523 / NBRC 100496 / NCIMB 8023 / NCTC 12954 / NRRL B-1118 / 37Y).